The following is a 554-amino-acid chain: Terpene synthase 17 (554 aa).

3 residues coordinate Mg(2+): Asp-306, Asp-310, and Glu-458. Positions 306–310 (DDTYD) match the DDXXD motif motif.

This sequence belongs to the terpene synthase family. Tpsa subfamily. It depends on Mg(2+) as a cofactor. Mn(2+) is required as a cofactor.

It catalyses the reaction (2E,6E)-farnesyl diphosphate = (+)-valencene + diphosphate. The enzyme catalyses (2E,6E)-farnesyl diphosphate = (E)-beta-farnesene + diphosphate. The catalysed reaction is (2E,6E)-farnesyl diphosphate = gamma-gurjunene + diphosphate. It carries out the reaction (2Z,6Z)-farnesyl diphosphate = beta-bisabolene + diphosphate. It catalyses the reaction (2Z,6Z)-farnesyl diphosphate = (E)-gamma-bisabolene + diphosphate. The enzyme catalyses (2E)-geranyl diphosphate = limonene + diphosphate. The catalysed reaction is (2E)-geranyl diphosphate = beta-myrcene + diphosphate. It carries out the reaction (2E)-geranyl diphosphate = (E)-beta-ocimene + diphosphate. It catalyses the reaction (2E)-geranyl diphosphate = terpinolene + diphosphate. The enzyme catalyses (2E)-geranyl diphosphate = gamma-terpinene + diphosphate. The catalysed reaction is (2Z,6Z)-farnesyl diphosphate = (Z)-gamma-bisabolene + diphosphate. It carries out the reaction (2E,6E)-farnesyl diphosphate = (1S,5S,6R)-alpha-bergamotene + diphosphate. It catalyses the reaction (2Z,6Z)-farnesyl diphosphate = (1S,5S,6S)-alpha-bergamotene + diphosphate. The protein operates within secondary metabolite biosynthesis; terpenoid biosynthesis. Sesquiterpene synthase involved in the biosynthesis of volatile compounds. Mediates the conversion of (2E,6E)-farnesyl diphosphate (FPP) into gamma-gurjunene, (E)-beta-farnesene and (+)-valencene, and of (2Z,6Z)-farnesyl diphosphate ((ZZ)-FPP) into (E)-alpha-bergamotene and (Z)-gamma-bisabolene as well as beta-bisabolene, (Z)-alpha-bergamotene and (E)-gamma-bisabolene to a lower extent. Can act with a low efficiency as a monoterpene synthase with geranyl diphosphate (GPP) as substrate, thus producing beta-myrcene, (E)-beta-ocimene, limonene, terpinolene, gamma-terpinene and (Z)-beta-ocimene. This Solanum habrochaites (Wild tomato) protein is Terpene synthase 17.